The sequence spans 257 residues: UPF0246 protein CLL_A2361 (257 aa).

This sequence belongs to the UPF0246 family.

This is UPF0246 protein CLL_A2361 from Clostridium botulinum (strain Eklund 17B / Type B).